Reading from the N-terminus, the 358-residue chain is Sesquiterpene synthase Agr3 (358 aa).

Mg(2+)-binding residues include aspartate 99, asparagine 246, serine 250, and glutamate 254. The DDXXD motif signature appears at 99–103; the sequence is DNISD. (2E,6E)-farnesyl diphosphate-binding residues include arginine 334 and tyrosine 335.

Belongs to the terpene synthase family. Mg(2+) serves as cofactor.

The catalysed reaction is (2E,6E)-farnesyl diphosphate = alpha-muurolene + diphosphate. It carries out the reaction (2E,6E)-farnesyl diphosphate = gamma-muurolene + diphosphate. The enzyme catalyses (2E,6E)-farnesyl diphosphate = delta-cadinene + diphosphate. Its function is as follows. Terpene cyclase that catalyzes the cyclization of farnesyl diphosphate (FPP) to various sesquiterpenes, including alpha-muurolene, gamma-muurolene, germacrene, delta-cadinene, delta-cadinol and cubenol. In Cyclocybe aegerita (Black poplar mushroom), this protein is Sesquiterpene synthase Agr3.